We begin with the raw amino-acid sequence, 181 residues long: SAGA-associated factor 11 (181 aa).

An SGF11-type zinc finger spans residues 93 to 114 (FNCMNCGRQIVAGRFAPHLEKC). Basic residues predominate over residues 116-125 (GKGRKARAKT). Residues 116–181 (GKGRKARAKT…FTVRENVKGD (66 aa)) form a disordered region. Positions 126 to 153 (TRSTTAAQNRNARRSPNPRYSPYPNSAS) are enriched in low complexity.

It belongs to the SGF11 family. In terms of assembly, component of a deubiquitination module (DUB module) formed by ENY2, SGF11, and UBP22 in Arabidopsis. Interacts directly with ENY2 and UBP22. Interacts with DDA1. In terms of processing, ubiquitinated in DET1-dependent manner. Ubiquitination probably leads to its subsequent proteasomal degradation.

The protein resides in the nucleus. Its subcellular location is the nucleoplasm. In terms of biological role, component of a deubiquitination module (DUB module) that specifically deubiquinates monoubiquinated histone H2B (H2Bub). Does not seem to be a component of the TREX-2 complex. Seems to act independently of the SAGA multiprotein complex. The DUB module is responsible for the major H2Bub deubiquitinase activity in Arabidopsis. The protein is SAGA-associated factor 11 of Arabidopsis thaliana (Mouse-ear cress).